The following is an 883-amino-acid chain: Probable ribonuclease ZC3H12C (883 aa).

Disordered stretches follow at residues 53-109 and 139-158; these read QLSP…ISVE and DFKP…PPDV. S230 bears the Phosphoserine mark. An RNase NYN domain is found at 245–400; the sequence is LRPIVIDGSN…LGRHGPSLDN (156 aa). Residues 410–435 form a C3H1-type zinc finger; the sequence is EHKKQPCPYGKKCTYGHKCKYYHPER. Disordered regions lie at residues 456-551, 680-738, and 754-775; these read AKTA…FPPQ, FHDP…KAPH, and SRLY…EGLG. The span at 466 to 477 shows a compositional bias: polar residues; that stretch reads KSNSVPCSTKAD. Basic and acidic residues predominate over residues 503-515; it reads LEEKLPTKNKLET. The segment covering 517 to 542 has biased composition (polar residues); sequence SVPSLVSIPATSTAKPQSTTSLSNGL. Residues 705–714 show a composition bias toward low complexity; that stretch reads HLALHLPHSA.

It belongs to the ZC3H12 family. Mg(2+) serves as cofactor.

Its function is as follows. May function as RNase and regulate the levels of target RNA species. This is Probable ribonuclease ZC3H12C (ZC3H12C) from Homo sapiens (Human).